The following is a 278-amino-acid chain: Bifunctional protein FolD (278 aa).

NADP(+) contacts are provided by residues 162 to 164 (GAG) and isoleucine 228.

This sequence belongs to the tetrahydrofolate dehydrogenase/cyclohydrolase family. In terms of assembly, homodimer.

The catalysed reaction is (6R)-5,10-methylene-5,6,7,8-tetrahydrofolate + NADP(+) = (6R)-5,10-methenyltetrahydrofolate + NADPH. It catalyses the reaction (6R)-5,10-methenyltetrahydrofolate + H2O = (6R)-10-formyltetrahydrofolate + H(+). It participates in one-carbon metabolism; tetrahydrofolate interconversion. In terms of biological role, catalyzes the oxidation of 5,10-methylenetetrahydrofolate to 5,10-methenyltetrahydrofolate and then the hydrolysis of 5,10-methenyltetrahydrofolate to 10-formyltetrahydrofolate. In Hydrogenobaculum sp. (strain Y04AAS1), this protein is Bifunctional protein FolD.